A 1134-amino-acid chain; its full sequence is ATP-dependent helicase/deoxyribonuclease subunit B (1134 aa).

G8–S15 contributes to the ATP binding site. Residues C771, C1089, C1092, and C1098 each coordinate [4Fe-4S] cluster.

The protein belongs to the helicase family. AddB/RexB type 1 subfamily. In terms of assembly, heterodimer of AddA and AddB. It depends on Mg(2+) as a cofactor. Requires [4Fe-4S] cluster as cofactor.

The heterodimer acts as both an ATP-dependent DNA helicase and an ATP-dependent, dual-direction single-stranded exonuclease. Recognizes the chi site generating a DNA molecule suitable for the initiation of homologous recombination. The AddB subunit has 5' -&gt; 3' nuclease activity but not helicase activity. In Clostridium novyi (strain NT), this protein is ATP-dependent helicase/deoxyribonuclease subunit B.